The chain runs to 59 residues: ATP synthase protein 8 (59 aa).

A helical transmembrane segment spans residues 7–23 (LSPPFLYFELIGHFQVE).

The protein belongs to the ATPase protein 8 family. F-type ATPases have 2 components, CF(1) - the catalytic core - and CF(0) - the membrane proton channel.

The protein resides in the mitochondrion membrane. Its function is as follows. Mitochondrial membrane ATP synthase (F(1)F(0) ATP synthase or Complex V) produces ATP from ADP in the presence of a proton gradient across the membrane which is generated by electron transport complexes of the respiratory chain. F-type ATPases consist of two structural domains, F(1) - containing the extramembraneous catalytic core and F(0) - containing the membrane proton channel, linked together by a central stalk and a peripheral stalk. During catalysis, ATP synthesis in the catalytic domain of F(1) is coupled via a rotary mechanism of the central stalk subunits to proton translocation. Part of the complex F(0) domain. Minor subunit located with subunit a in the membrane. This is ATP synthase protein 8 (MT-ATP8) from Oenothera berteroana (Bertero's evening primrose).